A 208-amino-acid polypeptide reads, in one-letter code: GATA transcription factor 29 (208 aa).

The GATA-type; atypical zinc finger occupies 155–208; that stretch reads GMKKCTNMNCNALNTPMWRRGPLGPKSLCNACGIKFRKEEERKAKRNVVIVLDD.

This sequence belongs to the type IV zinc-finger family. Class B subfamily.

Its subcellular location is the nucleus. Its function is as follows. Transcriptional regulator that specifically binds 5'-GATA-3' or 5'-GAT-3' motifs within gene promoters. The sequence is that of GATA transcription factor 29 (GATA29) from Arabidopsis thaliana (Mouse-ear cress).